The sequence spans 330 residues: Geranylgeranyl diphosphate synthase (330 aa).

Positions 43, 46, and 75 each coordinate isopentenyl diphosphate. Residues D82 and D86 each contribute to the Mg(2+) site. An an all-trans-polyprenyl diphosphate-binding site is contributed by R91. R92 serves as a coordination point for isopentenyl diphosphate. 5 residues coordinate an all-trans-polyprenyl diphosphate: K175, T176, Q213, K230, and K240.

It belongs to the FPP/GGPP synthase family. Mg(2+) is required as a cofactor.

The catalysed reaction is isopentenyl diphosphate + (2E,6E)-farnesyl diphosphate = (2E,6E,10E)-geranylgeranyl diphosphate + diphosphate. It participates in isoprenoid biosynthesis; geranylgeranyl diphosphate biosynthesis; geranylgeranyl diphosphate from farnesyl diphosphate and isopentenyl diphosphate: step 1/1. Its function is as follows. Catalyzes the condensation of isopentenyl pyrophosphate with the allylic pyrophosphates to yield geranylgeranyl diphosphate (GGPP) which is a precursor of the ether-linked lipids. It is able to use dimethylallyl diphosphate (DMAPP), geranyl diphosphate (GPP), and (all-E)-geranyl diphosphate (E-FPP) as an allylic substrate. This is Geranylgeranyl diphosphate synthase (gds) from Sulfolobus acidocaldarius (strain ATCC 33909 / DSM 639 / JCM 8929 / NBRC 15157 / NCIMB 11770).